A 607-amino-acid polypeptide reads, in one-letter code: ATP-dependent RNA helicase DBP6 (607 aa).

The disordered stretch occupies residues 1–83 (MFAARFDPSR…GTGEADKRHQ (83 aa)). The span at 34–59 (QDESESEMSSAESEDEAMQLDDEEEV) shows a compositional bias: acidic residues. Residues 60 to 69 (VDSKGKENHG) are compositionally biased toward basic and acidic residues. The Q motif signature appears at 184–192 (AFPIQTALL). The region spanning 208–388 (RYYTRKVGDI…DLQLHNPKLF (181 aa)) is the Helicase ATP-binding domain. Position 221–228 (221–228 (ASTGSGKT)) interacts with ATP. Positions 328–331 (DEAD) match the DEAD box motif. The Helicase C-terminal domain maps to 419 to 578 (ILLRLLPLLS…GSHLFFDEEQ (160 aa)).

This sequence belongs to the DEAD box helicase family. DDX51/DBP6 subfamily. In terms of assembly, associated with pre-ribosomal particles.

The protein localises to the nucleus. Its subcellular location is the nucleolus. The catalysed reaction is ATP + H2O = ADP + phosphate + H(+). In terms of biological role, ATP-binding RNA helicase involved in the biogenesis of 60S ribosomal subunits and is required for the normal formation of 25S and 5.8S rRNAs. This chain is ATP-dependent RNA helicase DBP6 (DBP6), found in Eremothecium gossypii (strain ATCC 10895 / CBS 109.51 / FGSC 9923 / NRRL Y-1056) (Yeast).